We begin with the raw amino-acid sequence, 196 residues long: Large ribosomal subunit protein uL18 (196 aa).

The protein belongs to the universal ribosomal protein uL18 family. Part of the 50S ribosomal subunit. Contacts the 5S and 23S rRNAs.

Functionally, this is one of the proteins that bind and probably mediate the attachment of the 5S RNA into the large ribosomal subunit, where it forms part of the central protuberance. The polypeptide is Large ribosomal subunit protein uL18 (Thermofilum pendens (strain DSM 2475 / Hrk 5)).